We begin with the raw amino-acid sequence, 188 residues long: Pyridoxal 5'-phosphate synthase subunit PdxT (188 aa).

L-glutamine is bound at residue 46-48 (GES). Catalysis depends on C78, which acts as the Nucleophile. L-glutamine contacts are provided by residues R105 and 134 to 135 (IR). Catalysis depends on charge relay system residues H170 and E172.

This sequence belongs to the glutaminase PdxT/SNO family. In the presence of PdxS, forms a dodecamer of heterodimers. Only shows activity in the heterodimer.

The enzyme catalyses aldehydo-D-ribose 5-phosphate + D-glyceraldehyde 3-phosphate + L-glutamine = pyridoxal 5'-phosphate + L-glutamate + phosphate + 3 H2O + H(+). The catalysed reaction is L-glutamine + H2O = L-glutamate + NH4(+). The protein operates within cofactor biosynthesis; pyridoxal 5'-phosphate biosynthesis. Functionally, catalyzes the hydrolysis of glutamine to glutamate and ammonia as part of the biosynthesis of pyridoxal 5'-phosphate. The resulting ammonia molecule is channeled to the active site of PdxS. The sequence is that of Pyridoxal 5'-phosphate synthase subunit PdxT from Thermotoga maritima (strain ATCC 43589 / DSM 3109 / JCM 10099 / NBRC 100826 / MSB8).